A 500-amino-acid chain; its full sequence is L-arabinose isomerase (500 aa).

The Mn(2+) site is built by Glu-306, Glu-333, His-350, and His-450.

It belongs to the arabinose isomerase family. In terms of assembly, homohexamer. Mn(2+) is required as a cofactor.

It carries out the reaction beta-L-arabinopyranose = L-ribulose. It participates in carbohydrate degradation; L-arabinose degradation via L-ribulose; D-xylulose 5-phosphate from L-arabinose (bacterial route): step 1/3. Its function is as follows. Catalyzes the conversion of L-arabinose to L-ribulose. This Salmonella enteritidis PT4 (strain P125109) protein is L-arabinose isomerase.